Reading from the N-terminus, the 381-residue chain is MANNEDSNSNGLDSFDAVKQRFKDRSKKVVQTRELLSKQAVQTREILSKQAVKIAKQAEEHERFINKVTHLVGVLGFGGFCFLLGARPQDIPLVYCFFYVIFVPLRWIYYRFKKWHYYLLDFCYYANTIFLVDLLLYPKNEKLFMVCFSFAEGPLAWAIIVWRCSLVFSSPDKIVSVLIHLLPGLVFFTIRWWNPATFAAMHPVGTDRRVSWPYVEDKAYLFTWLFLVPLVVYTLWQVLYFLIVNVLRRQRLLRDPEVMTSYRELSKKAEKANNKLWQLSGLLGDQNRIWMYILFQAIFTVATMALTVPIFLSYRLHVIFQILKISAAVWNGGSFLLEVMPRQVIQKEKKKKAEMQPIEEQILHHEAVSHPTENEPKSTET.

The Cytoplasmic portion of the chain corresponds to 1–63; the sequence is MANNEDSNSN…IAKQAEEHER (63 aa). The helical transmembrane segment at 64 to 84 threads the bilayer; the sequence is FINKVTHLVGVLGFGGFCFLL. At 85 to 89 the chain is on the lumenal side; it reads GARPQ. The chain crosses the membrane as a helical span at residues 90-110; sequence DIPLVYCFFYVIFVPLRWIYY. At 111–116 the chain is on the cytoplasmic side; the sequence is RFKKWH. Residues 117–137 traverse the membrane as a helical segment; the sequence is YYLLDFCYYANTIFLVDLLLY. The Lumenal segment spans residues 138-141; that stretch reads PKNE. A helical transmembrane segment spans residues 142–162; sequence KLFMVCFSFAEGPLAWAIIVW. Residues 163-173 lie on the Cytoplasmic side of the membrane; sequence RCSLVFSSPDK. Residues 174-194 form a helical membrane-spanning segment; it reads IVSVLIHLLPGLVFFTIRWWN. The Lumenal segment spans residues 195–223; that stretch reads PATFAAMHPVGTDRRVSWPYVEDKAYLFT. The chain crosses the membrane as a helical span at residues 224 to 244; sequence WLFLVPLVVYTLWQVLYFLIV. Residues 245–291 lie on the Cytoplasmic side of the membrane; sequence NVLRRQRLLRDPEVMTSYRELSKKAEKANNKLWQLSGLLGDQNRIWM. A helical transmembrane segment spans residues 292–312; that stretch reads YILFQAIFTVATMALTVPIFL. Residues 313–315 lie on the Lumenal side of the membrane; that stretch reads SYR. A helical transmembrane segment spans residues 316 to 336; that stretch reads LHVIFQILKISAAVWNGGSFL. The Cytoplasmic portion of the chain corresponds to 337-381; sequence LEVMPRQVIQKEKKKKAEMQPIEEQILHHEAVSHPTENEPKSTET.

It belongs to the GPC1 family.

The protein localises to the membrane. The catalysed reaction is sn-glycerol 3-phosphocholine + an acyl-CoA = a 1-acyl-sn-glycero-3-phosphocholine + CoA. It catalyses the reaction sn-glycero-3-phosphoethanolamine + an acyl-CoA = a monoacyl-sn-glycero-3-phosphoethanolamine + CoA. The enzyme catalyses sn-glycerol 3-phosphocholine + (9Z)-octadecenoyl-CoA = (9Z-octadecenoyl)-sn-glycero-3-phosphocholine + CoA. Its function is as follows. Glycerophosphocholine acyltransferase (GPCAT) that utilizes acyl-CoA to acylate glycero-3-phosphocholine (GPC), forming lysophosphatidylcholine (LPC). Shows broad acyl specificities with a preference for 16:0-CoA, polyunsaturated acyl-CoA, and the hydroxylated ricinoleoyl-CoA. Also catalyzes the acylation of glycero-3-phosphoethanolamine (GPE) with acyl-CoA. In addition to acyl-CoA, GPCAT efficiently utilizes LPC and lysophosphatidylethanolamine (LPE) as acyl donors in the acylation of GPC. Contributes to the maintenance of phosphatidylcholine (PC) homeostasis and might also have specific functions in acyl editing of PC, such as transferring acyl groups modified at the sn-2 position of PC to the sn-1. The polypeptide is Glycerophosphocholine acyltransferase 1 (Arabidopsis thaliana (Mouse-ear cress)).